A 165-amino-acid polypeptide reads, in one-letter code: Pyruvoyl-dependent arginine decarboxylase 1 (165 aa).

Serine 45 is modified (pyruvic acid (Ser)).

This sequence belongs to the PdaD family. Requires pyruvate as cofactor.

It carries out the reaction L-arginine + H(+) = agmatine + CO2. The polypeptide is Pyruvoyl-dependent arginine decarboxylase 1 (pdaD1) (Methanosarcina acetivorans (strain ATCC 35395 / DSM 2834 / JCM 12185 / C2A)).